A 215-amino-acid chain; its full sequence is Peroxiredoxin (215 aa).

The Thioredoxin domain occupies 6 to 161 (PLIGEEFPRL…ILRAVRALQT (156 aa)). Catalysis depends on Cys48, which acts as the Cysteine sulfenic acid (-SOH) intermediate. Substrate is bound at residue Arg124. Cys205 and Cys211 are disulfide-bonded.

It belongs to the peroxiredoxin family. Prx6 subfamily. As to quaternary structure, homodecamer. Pentamer of dimers that assemble into a ring structure.

The protein resides in the cytoplasm. The catalysed reaction is a hydroperoxide + [thioredoxin]-dithiol = an alcohol + [thioredoxin]-disulfide + H2O. Functionally, thiol-specific peroxidase that catalyzes the reduction of hydrogen peroxide and organic hydroperoxides to water and alcohols, respectively. Plays a role in cell protection against oxidative stress by detoxifying peroxides. The chain is Peroxiredoxin from Thermotoga petrophila (strain ATCC BAA-488 / DSM 13995 / JCM 10881 / RKU-1).